We begin with the raw amino-acid sequence, 355 residues long: Mitochondrial import inner membrane translocase subunit TIM50 (355 aa).

Residues 1-44 constitute a mitochondrion transit peptide; it reads MAASAAVFLRLRSGLRQGARGLCARLATPPPRAPDQAAEIGSRA. Residues 25–61 are disordered; it reads RLATPPPRAPDQAAEIGSRAGTKAQTQGPQQQRSSEG. The Mitochondrial matrix portion of the chain corresponds to 45–67; the sequence is GTKAQTQGPQQQRSSEGPSYAKK. Residues 47–61 show a composition bias toward polar residues; that stretch reads KAQTQGPQQQRSSEG. Residues 68–88 form a helical membrane-spanning segment; that stretch reads VALWLARLLGAGGTVSVIYIF. Residues 89–355 are Mitochondrial intermembrane-facing; the sequence is GNNAVDENGA…SRLWPRSKQP (267 aa). Positions 145–288 constitute an FCP1 homology domain; sequence YYQPPYTLVL…LDLSAFLKTI (144 aa). S343 carries the post-translational modification Phosphoserine.

This sequence belongs to the TIM50 family. In terms of assembly, component of the TIM23 complex at least composed of TIMM23, TIMM17 (TIMM17A or TIMM17B) and TIMM50; within this complex, directly interacts with TIMM23. The complex interacts with the TIMM44 component of the PAM complex and with DNAJC15.

Its subcellular location is the mitochondrion inner membrane. Its function is as follows. Essential component of the TIM23 complex, a complex that mediates the translocation of transit peptide-containing proteins across the mitochondrial inner membrane. Has some phosphatase activity in vitro; however such activity may not be relevant in vivo. The polypeptide is Mitochondrial import inner membrane translocase subunit TIM50 (TIMM50) (Bos taurus (Bovine)).